Here is a 701-residue protein sequence, read N- to C-terminus: CRS2-associated factor 1, chloroplastic (701 aa).

A chloroplast-targeting transit peptide spans 1 to 77; the sequence is MATSHLTSRS…ENGEPAAGVR (77 aa). CRM domains are found at residues 183-279 and 301-397; these read EPLT…TRPI and DGLT…LPPL. The tract at residues 581–603 is CRS2 binding; sequence GILLLFKQAIDSGMALVLNENEF.

As to quaternary structure, interacts with CRS2 and RNA. Part of large ribonucleo-protein complexes that include group IIB introns, CRS2 and CAF1.

It localises to the plastid. The protein resides in the chloroplast stroma. Required for the splicing of group IIB introns in chloroplasts. Forms splicing particles with CRS2. Interacts with RNA and confers intron specificity of the splicing particles. In Oryza sativa subsp. japonica (Rice), this protein is CRS2-associated factor 1, chloroplastic.